Here is a 539-residue protein sequence, read N- to C-terminus: Probable protein kinase UbiB (539 aa).

A helical transmembrane segment spans residues 23–43; it reads DLLFALPLPWWMLAVRFVLPW. Residues 125–492 form the Protein kinase domain; that stretch reads RFDETPLASA…WHDRKDEPVL (368 aa). ATP is bound by residues 131-139 and Lys-153; that span reads LASASVAQV. Asp-288 serves as the catalytic Proton acceptor. The next 2 membrane-spanning stretches (helical) occupy residues 494 to 514 and 517 to 537; these read LIGAALLVGGAIQGWVMSEAA and LLTLTAWPAAIMLIAGLYLIV.

It belongs to the ABC1 family. UbiB subfamily.

It localises to the cell inner membrane. The protein operates within cofactor biosynthesis; ubiquinone biosynthesis [regulation]. Its function is as follows. Is probably a protein kinase regulator of UbiI activity which is involved in aerobic coenzyme Q (ubiquinone) biosynthesis. This is Probable protein kinase UbiB from Pseudomonas syringae pv. tomato (strain ATCC BAA-871 / DC3000).